The primary structure comprises 558 residues: MRYLITSALPYINGIKHLGNLVGSMLPADIYARFLRQEGEEVLYICATDEHGTPAEIAAIDAGLEVAEFCAKQYHKQKEIYKRFGLSFDYFGRTSAPENHELTQYFYQQLAKQNFIEEREISQFYALDDQRFLPDRYVTGTCPHCGYEQARGDQCENCTKVLTPTELIKPRSTISGSTHLELRTSRHLFLRLDKLSDEVRNWVDKQTQWSTLTKSIALKWLNEGLKSRCITRDLVWGVPVPTEGFERKVFYVWFDAPIGYISATKAWGDITNNDWECWWKESDDVHYTQFMAKDNLPFHTIMWPATILGSREPWKMVDYIKGFNWLNYYGGKFSTSSQRGVFLDQALEIASADNWRYMLIANAPESADSAFTWEQFQKQVNKELADNLGNFVNRILKFTASRFGMTLPEGGTPGDAEAELQVTCNELVEKLRKYLHNLEFRRATETLNALWRTGNQYIDVRAPWVLFKTDQDETAMVIRTCVNLIRLYAISSAPFIPHTTQALFDALQLTDVERRHTMTEASDLTLLAAGRSFMVPAPLFQKIDDDLVAELKAQYGGE.

A 'HIGH' region motif is present at residues 10 to 20 (PYINGIKHLGN). The Zn(2+) site is built by Cys-142, Cys-145, Cys-155, and Cys-158. The 'KMSKS' region signature appears at 332-336 (KFSTS). ATP is bound at residue Thr-335.

The protein belongs to the class-I aminoacyl-tRNA synthetase family. MetG type 1 subfamily. In terms of assembly, monomer. Requires Zn(2+) as cofactor.

The protein resides in the cytoplasm. It catalyses the reaction tRNA(Met) + L-methionine + ATP = L-methionyl-tRNA(Met) + AMP + diphosphate. Is required not only for elongation of protein synthesis but also for the initiation of all mRNA translation through initiator tRNA(fMet) aminoacylation. This is Methionine--tRNA ligase 1 from Acaryochloris marina (strain MBIC 11017).